The sequence spans 267 residues: Phosphate import ATP-binding protein PstB 2 (267 aa).

Residues 21-262 (LTTKDLHVYY…AKCQSTSDYV (242 aa)) form the ABC transporter domain. 53–60 (GPSGCGKS) provides a ligand contact to ATP.

Belongs to the ABC transporter superfamily. Phosphate importer (TC 3.A.1.7) family. In terms of assembly, the complex is composed of two ATP-binding proteins (PstB), two transmembrane proteins (PstC and PstA) and a solute-binding protein (PstS).

The protein resides in the cell membrane. It carries out the reaction phosphate(out) + ATP + H2O = ADP + 2 phosphate(in) + H(+). In terms of biological role, part of the ABC transporter complex PstSACB involved in phosphate import. Responsible for energy coupling to the transport system. The sequence is that of Phosphate import ATP-binding protein PstB 2 from Streptococcus agalactiae serotype Ia (strain ATCC 27591 / A909 / CDC SS700).